The sequence spans 151 residues: 6,7-dimethyl-8-ribityllumazine synthase (151 aa).

5-amino-6-(D-ribitylamino)uracil is bound by residues F15, 49-51, and 73-75; these read AVE and AVI. 78–79 provides a ligand contact to (2S)-2-hydroxy-3-oxobutyl phosphate; the sequence is ET. Residue H81 is the Proton donor of the active site. F106 provides a ligand contact to 5-amino-6-(D-ribitylamino)uracil. (2S)-2-hydroxy-3-oxobutyl phosphate is bound at residue R120.

Belongs to the DMRL synthase family. In terms of assembly, forms an icosahedral capsid composed of 60 subunits, arranged as a dodecamer of pentamers.

It catalyses the reaction (2S)-2-hydroxy-3-oxobutyl phosphate + 5-amino-6-(D-ribitylamino)uracil = 6,7-dimethyl-8-(1-D-ribityl)lumazine + phosphate + 2 H2O + H(+). The protein operates within cofactor biosynthesis; riboflavin biosynthesis; riboflavin from 2-hydroxy-3-oxobutyl phosphate and 5-amino-6-(D-ribitylamino)uracil: step 1/2. In terms of biological role, catalyzes the formation of 6,7-dimethyl-8-ribityllumazine by condensation of 5-amino-6-(D-ribitylamino)uracil with 3,4-dihydroxy-2-butanone 4-phosphate. This is the penultimate step in the biosynthesis of riboflavin. This is 6,7-dimethyl-8-ribityllumazine synthase from Coxiella burnetii (strain Dugway 5J108-111).